Reading from the N-terminus, the 179-residue chain is Centromere protein R (179 aa).

A disordered region spans residues 1 to 79; that stretch reads MSAKRSLKLD…RLSRRGQPQT (79 aa). The span at 30 to 50 shows a compositional bias: polar residues; the sequence is NSYSPTTGTCQISPFSSPTSH. Residues 51–64 show a composition bias toward basic and acidic residues; that stretch reads NAEDLRNGLSHGDE. The short motif at 172-176 is the LXXLL motif element; sequence LQLLL.

Its subcellular location is the nucleus. The protein localises to the chromosome. The protein resides in the centromere. It is found in the kinetochore. In terms of biological role, transcription coregulator that can have both coactivator and corepressor functions. Involved in the coactivation of nuclear receptors for retinoid X (RXRs) and thyroid hormone (TRs) in a ligand-dependent fashion. Probable component of a centromeric complex involved in assembly of kinetochore proteins, mitotic progression and chromosome segregation. The chain is Centromere protein R (CENPR) from Gallus gallus (Chicken).